The sequence spans 305 residues: Coiled-coil domain-containing protein 83 (305 aa).

The tract at residues methionine 1 to serine 25 is disordered. Basic and acidic residues predominate over residues serine 8–lysine 21. Positions glutamate 37–arginine 186 form a coiled coil.

This chain is Coiled-coil domain-containing protein 83 (Ccdc83), found in Mus musculus (Mouse).